The primary structure comprises 173 residues: Shikimate kinase 1 (173 aa).

An ATP-binding site is contributed by 14–19 (GAGKST). Ser-18 serves as a coordination point for Mg(2+). 3 residues coordinate substrate: Asp-36, Arg-60, and Gly-82. Position 120 (Arg-120) interacts with ATP. Arg-140 lines the substrate pocket. Gln-157 provides a ligand contact to ATP.

Belongs to the shikimate kinase family. As to quaternary structure, monomer. Mg(2+) serves as cofactor.

Its subcellular location is the cytoplasm. The enzyme catalyses shikimate + ATP = 3-phosphoshikimate + ADP + H(+). It participates in metabolic intermediate biosynthesis; chorismate biosynthesis; chorismate from D-erythrose 4-phosphate and phosphoenolpyruvate: step 5/7. Functionally, catalyzes the specific phosphorylation of the 3-hydroxyl group of shikimic acid using ATP as a cosubstrate. The sequence is that of Shikimate kinase 1 from Enterobacter sp. (strain 638).